The sequence spans 1041 residues: Importin-9 (1041 aa).

Residue Ala2 is modified to N-acetylalanine. The Importin N-terminal domain occupies 43–119 (AEEQIKVLEV…RELLPNGLRE (77 aa)). A disordered region spans residues 936–967 (QATPAEWNQDDSNDMWEDQEEEEEEEEDGLAG). Acidic residues predominate over residues 943 to 964 (NQDDSNDMWEDQEEEEEEEEDG).

It belongs to the importin beta family. Interacts with histones H2A, H2B, H3 and H4. The binding is coupled to RanGTP cycles. Interacts with AKIRIN2; promoting association with pre-assembled proteasomes. Associates with pre-assembled proteasomes; interaction is indirect and mediated via interaction with AKIRIN2. Interacts with PPP2R1A and PPP2R1B.

The protein localises to the cytoplasm. The protein resides in the nucleus. Functionally, nuclear transport receptor that mediates nuclear import of proteins, such as histones, proteasome and actin. Serves as receptor for nuclear localization signals (NLS) in cargo substrates. Is thought to mediate docking of the importin/substrate complex to the nuclear pore complex (NPC) through binding to nucleoporin and the complex is subsequently translocated through the pore by an energy requiring, Ran-dependent mechanism. At the nucleoplasmic side of the NPC, Ran binds to the importin, the importin/substrate complex dissociates and importin is re-exported from the nucleus to the cytoplasm where GTP hydrolysis releases Ran. The directionality of nuclear import is thought to be conferred by an asymmetric distribution of the GTP- and GDP-bound forms of Ran between the cytoplasm and nucleus. Mediates the import of pre-assembled proteasomes into the nucleus; AKIRIN2 acts as a molecular bridge between IPO9 and the proteasome complex. Mediates the nuclear import of histones H2A, H2B, H4 and H4. In addition to nuclear import, also acts as a chaperone for histones by preventing inappropriate non-nucleosomal interactions. Mediates the nuclear import of actin. The protein is Importin-9 of Mus musculus (Mouse).